Here is a 214-residue protein sequence, read N- to C-terminus: Type IV major pilin protein PilE1 (214 aa).

The propeptide at Met1–Gly7 is leader sequence. Phe8 bears the N-methylphenylalanine mark. Residues Phe8–Leu28 traverse the membrane as a helical segment. A disulfide bridge connects residues Cys127 and Cys161. A disordered region spans residues Ala182–Glu214. Over residues Thr192–Glu214 the composition is skewed to basic and acidic residues.

This sequence belongs to the N-Me-Phe pilin family. As to quaternary structure, the pili are polar flexible filaments of about 5.4 nanometers diameter and 2.5 micrometers average length; they consist of only a single polypeptide chain arranged in a helical configuration of five subunits per turn in the assembled pilus.

Its subcellular location is the fimbrium. It is found in the membrane. Functionally, major component of the type IV pilus (T4P) that plays a role in cellular adherence, microcolony formation, resistance to neutrophil mediated killing, twitching motility as well as transformation. Mediates the attachment and the formation of bacterial microcolonies on host epithelial cells. Mechanistically, pili retractation induces host NF-kappa-B activation in infected cells, which is temporally associated with the formation of gonococcal microcolonies. The sequence is that of Type IV major pilin protein PilE1 (pilE1) from Neisseria gonorrhoeae.